Reading from the N-terminus, the 416-residue chain is MKLELSRVVQGCRLGVLTGLGKSGQHSLEVPGCLLHTRCATVPHLTQDTLLTLSDLPAVTQVSVDSLAEHHEVLEEFKEGVRKFAGLHDTVIFCSLHDSASPSPAGHVTNKTVSVWGSGGRIELTAARFMSIQAAVQPDCYQSMADGETWQANTSRKRVRKAVDRTLAHLDECLVLHQKTQELKHAEIFGVVEGGDILEERLRSARETAKRPVGGFVLDGFHSSAMDQDVRAQLIQETSAELPQEKPRLVLGVGRPDEVISCVEAGVDLFESFFPFQVTERGCALSFNYTIDPDPETAGTSASTVLECNGETPEVKKPSANEDVENMTPFEINLKDKRYRDDFRPLVEGCVCYCCQKHMRAYVHHLLVTNELLAGVLLMLHNMAHYLGFFKALRDAITSDRLQDFKNTVLHRRQGD.

4 residues coordinate Zn(2+): Cys-350, Cys-352, Cys-355, and His-381.

This sequence belongs to the queuine tRNA-ribosyltransferase family. QTRT2 subfamily. As to quaternary structure, heterodimer of a catalytic subunit qtrt1 and an accessory subunit qtrt2. Requires Zn(2+) as cofactor.

It localises to the cytoplasm. It is found in the mitochondrion outer membrane. Its function is as follows. Non-catalytic subunit of the queuine tRNA-ribosyltransferase (TGT) that catalyzes the base-exchange of a guanine (G) residue with queuine (Q) at position 34 (anticodon wobble position) in tRNAs with GU(N) anticodons (tRNA-Asp, -Asn, -His and -Tyr), resulting in the hypermodified nucleoside queuosine (7-(((4,5-cis-dihydroxy-2-cyclopenten-1-yl)amino)methyl)-7-deazaguanosine). This Danio rerio (Zebrafish) protein is Queuine tRNA-ribosyltransferase accessory subunit 2.